The chain runs to 267 residues: MPELPEVETTRRRLRPLVLGQTLRQVVHRDPARYRNTALAEGRRILEVDRRGKFLLFALEGGVELVAHLGMTGGFRLEPTPHTRAALVLEGRTLYFHDPRRFGRLFGVRRGDYREIPLLLRLGPEPLSEAFAFPGFFRGLKESARPLKALLLDQRLAAGVGNIYADEALFRARLSPFRPARSLTEEEARRLYRALREVLAEAVELGGSTLSDQSYRQPDGLPGGFQTRHAVYGREGLPCPACGRPVERRVVAGRGTHFCPTCQGEGP.

Residue Pro2 is the Schiff-base intermediate with DNA of the active site. Glu3 serves as the catalytic Proton donor. The active-site Proton donor; for beta-elimination activity is the Lys53. Residues His82 and Arg100 each contribute to the DNA site. An FPG-type zinc finger spans residues 230–264 (AVYGREGLPCPACGRPVERRVVAGRGTHFCPTCQG). Arg254 (proton donor; for delta-elimination activity) is an active-site residue.

Belongs to the FPG family. As to quaternary structure, monomer. Zn(2+) serves as cofactor.

It carries out the reaction Hydrolysis of DNA containing ring-opened 7-methylguanine residues, releasing 2,6-diamino-4-hydroxy-5-(N-methyl)formamidopyrimidine.. The enzyme catalyses 2'-deoxyribonucleotide-(2'-deoxyribose 5'-phosphate)-2'-deoxyribonucleotide-DNA = a 3'-end 2'-deoxyribonucleotide-(2,3-dehydro-2,3-deoxyribose 5'-phosphate)-DNA + a 5'-end 5'-phospho-2'-deoxyribonucleoside-DNA + H(+). Its function is as follows. Involved in base excision repair of DNA damaged by oxidation or by mutagenic agents. Acts as a DNA glycosylase that recognizes and removes damaged bases. Has a preference for oxidized purines, such as 7,8-dihydro-8-oxoguanine (8-oxoG). Has AP (apurinic/apyrimidinic) lyase activity and introduces nicks in the DNA strand. Cleaves the DNA backbone by beta-delta elimination to generate a single-strand break at the site of the removed base with both 3'- and 5'-phosphates. In Thermus thermophilus (strain ATCC BAA-163 / DSM 7039 / HB27), this protein is Formamidopyrimidine-DNA glycosylase.